The primary structure comprises 360 residues: DNA integrity scanning protein DisA (360 aa).

The DAC domain occupies 9-147 (DDEIIEVLRM…GSRKYILRET (139 aa)). ATP-binding positions include Gly76, Leu94, and 107–111 (TRHKT).

It belongs to the DisA family. Homooctamer. Mg(2+) serves as cofactor.

The enzyme catalyses 2 ATP = 3',3'-c-di-AMP + 2 diphosphate. Its function is as follows. Participates in a DNA-damage check-point that is active prior to asymmetric division when DNA is damaged. DisA forms globular foci that rapidly scan along the chromosomes during sporulation, searching for lesions. When a lesion is present, DisA pauses at the lesion site. This triggers a cellular response that culminates in a temporary block in sporulation initiation. Functionally, also has diadenylate cyclase activity, catalyzing the condensation of 2 ATP molecules into cyclic di-AMP (c-di-AMP). c-di-AMP acts as a signaling molecule that couples DNA integrity with progression of sporulation. The rise in c-di-AMP level generated by DisA while scanning the chromosome, operates as a positive signal that advances sporulation; upon encountering a lesion, the DisA focus arrests at the damaged site and halts c-di-AMP synthesis. This Acetivibrio thermocellus (strain ATCC 27405 / DSM 1237 / JCM 9322 / NBRC 103400 / NCIMB 10682 / NRRL B-4536 / VPI 7372) (Clostridium thermocellum) protein is DNA integrity scanning protein DisA.